A 483-amino-acid polypeptide reads, in one-letter code: Glutamyl-tRNA(Gln) amidotransferase subunit A (483 aa).

Residues Lys-76 and Ser-151 each act as charge relay system in the active site. The Acyl-ester intermediate role is filled by Ser-175.

It belongs to the amidase family. GatA subfamily. In terms of assembly, heterotrimer of A, B and C subunits.

It carries out the reaction L-glutamyl-tRNA(Gln) + L-glutamine + ATP + H2O = L-glutaminyl-tRNA(Gln) + L-glutamate + ADP + phosphate + H(+). Functionally, allows the formation of correctly charged Gln-tRNA(Gln) through the transamidation of misacylated Glu-tRNA(Gln) in organisms which lack glutaminyl-tRNA synthetase. The reaction takes place in the presence of glutamine and ATP through an activated gamma-phospho-Glu-tRNA(Gln). The protein is Glutamyl-tRNA(Gln) amidotransferase subunit A of Pseudomonas fluorescens (strain ATCC BAA-477 / NRRL B-23932 / Pf-5).